We begin with the raw amino-acid sequence, 182 residues long: Transcription termination/antitermination protein NusG (182 aa).

Belongs to the NusG family.

Functionally, participates in transcription elongation, termination and antitermination. The sequence is that of Transcription termination/antitermination protein NusG from Chlamydia pneumoniae (Chlamydophila pneumoniae).